The sequence spans 285 residues: 2,3,4,5-tetrahydropyridine-2,6-dicarboxylate N-succinyltransferase (285 aa).

2 residues coordinate substrate: R111 and D148.

It belongs to the transferase hexapeptide repeat family. Homotrimer.

It localises to the cytoplasm. It catalyses the reaction (S)-2,3,4,5-tetrahydrodipicolinate + succinyl-CoA + H2O = (S)-2-succinylamino-6-oxoheptanedioate + CoA. Its pathway is amino-acid biosynthesis; L-lysine biosynthesis via DAP pathway; LL-2,6-diaminopimelate from (S)-tetrahydrodipicolinate (succinylase route): step 1/3. The sequence is that of 2,3,4,5-tetrahydropyridine-2,6-dicarboxylate N-succinyltransferase from Sinorhizobium fredii (strain NBRC 101917 / NGR234).